The sequence spans 285 residues: 1,4-dihydroxy-2-naphthoyl-CoA synthase (285 aa).

Residues arginine 45, 84 to 89, tyrosine 97, 129 to 133, threonine 155, serine 161, tyrosine 258, and lysine 273 contribute to the substrate site; these read SGGDQK and YSIGG. 154–156 contributes to the hydrogencarbonate binding site; it reads QTG.

It belongs to the enoyl-CoA hydratase/isomerase family. MenB subfamily. In terms of assembly, homohexamer. Dimer of a homotrimer. It depends on hydrogencarbonate as a cofactor.

It carries out the reaction 2-succinylbenzoyl-CoA + H(+) = 1,4-dihydroxy-2-naphthoyl-CoA + H2O. It participates in quinol/quinone metabolism; 1,4-dihydroxy-2-naphthoate biosynthesis; 1,4-dihydroxy-2-naphthoate from chorismate: step 6/7. Its pathway is quinol/quinone metabolism; menaquinone biosynthesis. With respect to regulation, inhibited by sulfite and nitrate. Converts o-succinylbenzoyl-CoA (OSB-CoA) to 1,4-dihydroxy-2-naphthoyl-CoA (DHNA-CoA). This chain is 1,4-dihydroxy-2-naphthoyl-CoA synthase, found in Escherichia coli (strain K12).